A 241-amino-acid polypeptide reads, in one-letter code: Sec-independent protein translocase protein TatC (241 aa).

A run of 6 helical transmembrane segments spans residues 27–47 (LIIV…FSAG), 76–96 (LTMC…YEAF), 122–142 (FVAG…SIVI), 161–181 (IVTN…IIVL), 193–213 (LVKG…FFSP), and 217–237 (LFSQ…SMVL).

It belongs to the TatC family. Forms a complex with TatA.

It localises to the cell membrane. Part of the twin-arginine translocation (Tat) system that transports large folded proteins containing a characteristic twin-arginine motif in their signal peptide across membranes. This Methanocella arvoryzae (strain DSM 22066 / NBRC 105507 / MRE50) protein is Sec-independent protein translocase protein TatC.